A 571-amino-acid chain; its full sequence is Proline--tRNA ligase (571 aa).

Belongs to the class-II aminoacyl-tRNA synthetase family. ProS type 1 subfamily. In terms of assembly, homodimer.

It is found in the cytoplasm. It carries out the reaction tRNA(Pro) + L-proline + ATP = L-prolyl-tRNA(Pro) + AMP + diphosphate. Functionally, catalyzes the attachment of proline to tRNA(Pro) in a two-step reaction: proline is first activated by ATP to form Pro-AMP and then transferred to the acceptor end of tRNA(Pro). As ProRS can inadvertently accommodate and process non-cognate amino acids such as alanine and cysteine, to avoid such errors it has two additional distinct editing activities against alanine. One activity is designated as 'pretransfer' editing and involves the tRNA(Pro)-independent hydrolysis of activated Ala-AMP. The other activity is designated 'posttransfer' editing and involves deacylation of mischarged Ala-tRNA(Pro). The misacylated Cys-tRNA(Pro) is not edited by ProRS. This is Proline--tRNA ligase from Actinobacillus pleuropneumoniae serotype 5b (strain L20).